A 365-amino-acid chain; its full sequence is Aminotransferase poxL (365 aa).

Arg-92 serves as a coordination point for pyridoxal 5'-phosphate. Lys-193 is modified (N6-(pyridoxal phosphate)lysine). Glu-229 lines the pyridoxal 5'-phosphate pocket.

Belongs to the class-IV pyridoxal-phosphate-dependent aminotransferase family. Pyridoxal 5'-phosphate is required as a cofactor.

It participates in secondary metabolite biosynthesis. Aminotransferase; part of the gene cluster that mediates the biosynthesis of oxaleimides, cytotoxic compounds containing an unusual disubstituted succinimide moiety. The first step of the pathway is provided by the HR-PKS poxF that serves in a new mode of collaborative biosynthesis with the PKS-NRPS poxE, by providing the olefin containing amino acid substrate via the synthesis of an ACP-bound dec-4-enoate. The cytochrome P450 monooxygenase poxM-catalyzed oxidation at the alpha-position creates the enzyme-bound 2-hydroxydec-4-enoyl-ACP thioester, which may be prone to spontaneous hydrolysis to yield 2-hydroxydec-4-enoic acid due to increased electrophilicity of the carbonyl. 2-hydroxydec-4-enoic acid can then be further oxidized by poxM to yield the alpha-ketoacid 2-oxodec-4-enoicacid, which is reductively aminated by the aminotransferase poxL to yield (S,E)-2-aminodec-4-enoic acid. The Hybrid PKS-NRPS synthetase poxE then performs condensation between the octaketide product of its PKS modules and the amino group of (S,E)-2-aminodec-4-enoic acid which is activated and incorporated by the adenylation domain. The resulting aminoacyl product can be cyclized by the Diels-Alderase PoxQ and reductively released by the reductive (R) domain of poxE to yield an aldehyde intermediate. The released aldehyde is then substrate for a Knoevenagel condensation by the hydrolyase poxO followed by an oxidation at the 5-position of the pyrrolidone ring. The presence of the olefin from the amino acid building block allows for migration of the substituted allyl group to occur. This allylic transposition reaction takes place in a conjugate addition, semipinacol-like fashion to yield a succinimide intermediate. Iterative two-electron oxidations of the C7 methyl of the succinimide intermediate to the carboxylic acid can be catalyzed by one of two remaining cytochrome P450 monooxygenasess poxC or poxD to yield oxaleimide A. Subsequent oxidation yields the maleimide scaffold oxaleimide I. Both oxaleimide A and oxaleimide I can undergo oxidative modifications in the decalin ring to yield the series of products oxaleimides B to H. In Penicillium oxalicum, this protein is Aminotransferase poxL.